The primary structure comprises 87 residues: MAKFNVLDHNLVPEHHIVSEEEEKTILKELGIEKEFLPRISPNDPVIKALEAIHGKIKDGTVIKIIRNSPTMGHSVYYRVVASEVFK.

This sequence belongs to the archaeal Rpo5/eukaryotic RPB5 RNA polymerase subunit family. Part of the RNA polymerase complex.

The protein resides in the cytoplasm. The enzyme catalyses RNA(n) + a ribonucleoside 5'-triphosphate = RNA(n+1) + diphosphate. DNA-dependent RNA polymerase (RNAP) catalyzes the transcription of DNA into RNA using the four ribonucleoside triphosphates as substrates. This is DNA-directed RNA polymerase subunit Rpo5 from Thermoplasma volcanium (strain ATCC 51530 / DSM 4299 / JCM 9571 / NBRC 15438 / GSS1).